A 198-amino-acid chain; its full sequence is dITP/XTP pyrophosphatase (198 aa).

Position 11–16 (11–16) interacts with substrate; the sequence is THNPGK. Glu44 and Asp73 together coordinate Mg(2+). Catalysis depends on Asp73, which acts as the Proton acceptor. Substrate contacts are provided by residues Ser74, 156-159, Lys179, and 184-185; these read FGYD and HR.

The protein belongs to the HAM1 NTPase family. In terms of assembly, homodimer. It depends on Mg(2+) as a cofactor.

The catalysed reaction is XTP + H2O = XMP + diphosphate + H(+). The enzyme catalyses dITP + H2O = dIMP + diphosphate + H(+). It catalyses the reaction ITP + H2O = IMP + diphosphate + H(+). Functionally, pyrophosphatase that catalyzes the hydrolysis of nucleoside triphosphates to their monophosphate derivatives, with a high preference for the non-canonical purine nucleotides XTP (xanthosine triphosphate), dITP (deoxyinosine triphosphate) and ITP. Seems to function as a house-cleaning enzyme that removes non-canonical purine nucleotides from the nucleotide pool, thus preventing their incorporation into DNA/RNA and avoiding chromosomal lesions. This is dITP/XTP pyrophosphatase (ysnA) from Bacillus subtilis (strain 168).